We begin with the raw amino-acid sequence, 379 residues long: MDKQDEKKQGTTKSSSTLTTRCSHGNHISQSNSIPLDITIEILSRLPAKSIVRSRSVSKLWSSITTTPEFIKHRSKKTSPPCVLLIFRKHDKLIVFSSPQHQNTYSHVQDYHIEIPKNGFIRRLDSVHGLICLEGSKQLVICNPTLKRFFPLPEPQGTGDEYNVGGFLGYEPIEGKYKALCIVRGWNTQVLTLEIQESWRVTKPGYTHWPTKDTGRCINGVIYYKAIIFDRVPRHVIFGFDLRYEEFTHIEFPMRNYDRFLMVSYEGRLALISSTSSVVEIWSLEDAGNRKWSYEQFHLCLPPNTSLKGVIDAGELIYTGFSLNRSFCVVYFDPKKNNIRETKFQGIADNQIWQPDRLGFDLVNDFYVLPNHIESFISF.

Positions 1-26 (MDKQDEKKQGTTKSSSTLTTRCSHGN) are disordered. A compositionally biased stretch (polar residues) spans 11-26 (TTKSSSTLTTRCSHGN). The 47-residue stretch at 28-74 (ISQSNSIPLDITIEILSRLPAKSIVRSRSVSKLWSSITTTPEFIKHR) folds into the F-box domain.

The protein is F-box protein At5g18160 of Arabidopsis thaliana (Mouse-ear cress).